The following is a 447-amino-acid chain: Tubulin beta-4 chain (447 aa).

The GTP site is built by Gln11, Glu69, Ser138, Gly142, Thr143, Gly144, Asn204, and Asn226. Glu69 contributes to the Mg(2+) binding site. The disordered stretch occupies residues 423 to 447 (QQYQDATADEEGEYEDEEQQEADDM). Over residues 429–447 (TADEEGEYEDEEQQEADDM) the composition is skewed to acidic residues.

This sequence belongs to the tubulin family. In terms of assembly, dimer of alpha and beta chains. A typical microtubule is a hollow water-filled tube with an outer diameter of 25 nm and an inner diameter of 15 nM. Alpha-beta heterodimers associate head-to-tail to form protofilaments running lengthwise along the microtubule wall with the beta-tubulin subunit facing the microtubule plus end conferring a structural polarity. Microtubules usually have 13 protofilaments but different protofilament numbers can be found in some organisms and specialized cells. Requires Mg(2+) as cofactor. Expressed in roots and leaf sheaths.

It is found in the cytoplasm. It localises to the cytoskeleton. Its function is as follows. Tubulin is the major constituent of microtubules, a cylinder consisting of laterally associated linear protofilaments composed of alpha- and beta-tubulin heterodimers. Microtubules grow by the addition of GTP-tubulin dimers to the microtubule end, where a stabilizing cap forms. Below the cap, tubulin dimers are in GDP-bound state, owing to GTPase activity of alpha-tubulin. The chain is Tubulin beta-4 chain (TUBB4) from Oryza sativa subsp. japonica (Rice).